Consider the following 285-residue polypeptide: Cell division protein ZipA (285 aa).

Residue Met1 is a topological domain, periplasmic. Residues 2–22 form a helical membrane-spanning segment; sequence EIGLREWLIVIGIVVIGGILF. The Cytoplasmic segment spans residues 23 to 285; sequence DGWRRMRGSK…FERRQLTHKR (263 aa). The segment at 49–88 is disordered; that stretch reads AVSENSELLGPSRSVDFPQGAGFEPDEENLPSLSVRGPSR.

This sequence belongs to the ZipA family. As to quaternary structure, interacts with FtsZ via their C-terminal domains.

It is found in the cell inner membrane. Essential cell division protein that stabilizes the FtsZ protofilaments by cross-linking them and that serves as a cytoplasmic membrane anchor for the Z ring. Also required for the recruitment to the septal ring of downstream cell division proteins. The sequence is that of Cell division protein ZipA from Azotobacter vinelandii (strain DJ / ATCC BAA-1303).